The chain runs to 127 residues: MFFPIVWLSVLLIISKSFAREIRLSRATYNEDDEEIQEVAEKAMEQVNDQTRYRNLYKLVRVISAQTQVVAGIKYYLTILAAPTTCRKGAVGMNPMKCTIDSSKPTKQFKIEVWSAPWQNTFKVTLT.

The first 19 residues, 1-19, serve as a signal peptide directing secretion; it reads MFFPIVWLSVLLIISKSFA. The Secondary area of contact signature appears at 68–72; it reads QVVAG. The cysteines at positions 86 and 98 are disulfide-linked.

It belongs to the cystatin family.

Its function is as follows. Cysteine protease inhibitor which inhibits members of the peptidase C1 family. Does not inhibit asparaginyl endopeptidase. This Brugia malayi (Filarial nematode worm) protein is Cystatin cpi-1.